Consider the following 354-residue polypeptide: Transcription factor ATOH1 (354 aa).

Positions 1-21 (MSRLLHAEEWAEVKELGDHHR) are enriched in basic and acidic residues. Disordered stretches follow at residues 1–55 (MSRL…ELSL) and 91–122 (EAAA…PGPV). Pro residues predominate over residues 26 to 38 (HHLPQPPPPPQPP). Residues 94–107 (APRDEVDGRGELVR) show a composition bias toward basic and acidic residues. The segment covering 108–122 (RSSGGASSSKSPGPV) has biased composition (low complexity). Residues 159–211 (QRRLAANARERRRMHGLNHAFDQLRNVIPSFNNDKKLSKYETLQMAQIYINAL) form the bHLH domain. 2 disordered regions span residues 216-277 (QTPS…TRFS) and 312-354 (SPSL…DEAS). The span at 250–264 (NATAAGAQQASGGSQ) shows a compositional bias: low complexity. Over residues 335 to 354 (HRSDGEFSPHSHYSDSDEAS) the composition is skewed to basic and acidic residues.

As to quaternary structure, efficient DNA binding requires dimerization with another bHLH protein.

The protein localises to the nucleus. Its function is as follows. Transcriptional regulator. Activates E box-dependent transcription in collaboration with TCF3/E47, but the activity is completely antagonized by the negative regulator of neurogenesis HES1. Plays a role in the differentiation of subsets of neural cells by activating E box-dependent transcription. The chain is Transcription factor ATOH1 from Homo sapiens (Human).